Consider the following 360-residue polypeptide: Peptide chain release factor 1 (360 aa).

Glutamine 235 bears the N5-methylglutamine mark. Basic and acidic residues predominate over residues 284-293 (ARRQQEESST). The segment at 284-314 (ARRQQEESSTRRNLLGSGDRSDRNRTYNFPQ) is disordered.

Belongs to the prokaryotic/mitochondrial release factor family. Post-translationally, methylated by PrmC. Methylation increases the termination efficiency of RF1.

The protein resides in the cytoplasm. Functionally, peptide chain release factor 1 directs the termination of translation in response to the peptide chain termination codons UAG and UAA. The protein is Peptide chain release factor 1 of Erwinia tasmaniensis (strain DSM 17950 / CFBP 7177 / CIP 109463 / NCPPB 4357 / Et1/99).